We begin with the raw amino-acid sequence, 167 residues long: UPF0225 protein VP1145 (167 aa).

This sequence belongs to the UPF0225 family.

This chain is UPF0225 protein VP1145, found in Vibrio parahaemolyticus serotype O3:K6 (strain RIMD 2210633).